The chain runs to 120 residues: Peptidyl-tRNA hydrolase (120 aa).

This sequence belongs to the PTH2 family.

It localises to the cytoplasm. The enzyme catalyses an N-acyl-L-alpha-aminoacyl-tRNA + H2O = an N-acyl-L-amino acid + a tRNA + H(+). In terms of biological role, the natural substrate for this enzyme may be peptidyl-tRNAs which drop off the ribosome during protein synthesis. The chain is Peptidyl-tRNA hydrolase from Saccharolobus islandicus (strain Y.N.15.51 / Yellowstone #2) (Sulfolobus islandicus).